The sequence spans 1131 residues: Phytochrome (1131 aa).

Positions 1–30 are disordered; that stretch reads MASNSRHTQSQSTGSNNRRSSTNTNTTTNK. Over residues 9–29 the composition is skewed to low complexity; the sequence is QSQSTGSNNRRSSTNTNTTTN. The GAF domain occupies 227 to 406; sequence DVGLLCDTVV…ALGLQLNMEL (180 aa). A phytochromobilin-binding site is contributed by C332. PAS domains follow at residues 621–692 and 755–826; these read VASE…LRGE and DYRS…TIVL. In terms of domain architecture, Histidine kinase spans 903–1123; that stretch reads YIRQEIKNPL…LVNVEFPMAQ (221 aa).

Belongs to the phytochrome family. Homodimer. In terms of processing, contains one covalently linked phytochromobilin chromophore.

Regulatory photoreceptor which exists in two forms that are reversibly interconvertible by light: the Pr form that absorbs maximally in the red region of the spectrum and the Pfr form that absorbs maximally in the far-red region. Photoconversion of Pr to Pfr induces an array of morphogenic responses, whereas reconversion of Pfr to Pr cancels the induction of those responses. Pfr controls the expression of a number of nuclear genes including those encoding the small subunit of ribulose-bisphosphate carboxylase, chlorophyll A/B binding protein, protochlorophyllide reductase, rRNA, etc. It also controls the expression of its own gene(s) in a negative feedback fashion. In Pinus sylvestris (Scotch pine), this protein is Phytochrome.